Here is a 579-residue protein sequence, read N- to C-terminus: Putative truncated flagellar export/assembly protein LfhA (579 aa).

Transmembrane regions (helical) follow at residues 86–106, 124–144, and 177–197; these read AIAG…IGIF, IGDG…AAII, and FVLA…SALL.

The protein belongs to the FHIPEP (flagella/HR/invasion proteins export pore) family.

It is found in the cell inner membrane. The sequence is that of Putative truncated flagellar export/assembly protein LfhA from Escherichia coli (strain K12).